The sequence spans 523 residues: Cytoplasmic dynein 1 light intermediate chain 1 (523 aa).

A disordered region spans residues 1-25; that stretch reads MAAVGRVGSFGSSPPGLASTYASGP. 74–81 provides a ligand contact to ATP; the sequence is GEDGAGKT. Disordered regions lie at residues 200–219, 387–434, and 457–523; these read PGED…QEDR, PPTA…DPNM, and GSPG…GEAS. Phosphoserine is present on S207. T213 is modified (phosphothreonine). Phosphoserine is present on residues S398 and S405. A Phosphothreonine modification is found at T408. 4 positions are modified to phosphoserine: S412, S419, S421, and S427. Residues 412–421 are compositionally biased toward low complexity; it reads SVSSNVASVS. The span at 458–473 shows a compositional bias: gly residues; it reads SPGGPGVGGSPGGGAA. Residues 474-485 are compositionally biased toward low complexity; sequence GASPSLPPSAKK. 2 positions are modified to phosphoserine: S486 and S510. A compositionally biased stretch (low complexity) spans 506-523; sequence PASVSPTTPTSPTEGEAS. Residues T512, T513, and T515 each carry the phosphothreonine modification. S516 carries the post-translational modification Phosphoserine.

The protein belongs to the dynein light intermediate chain family. As to quaternary structure, homodimer. The cytoplasmic dynein 1 complex consists of two catalytic heavy chains (HCs) and a number of non-catalytic subunits presented by intermediate chains (ICs), light intermediate chains (LICs) and light chains (LCs); the composition seems to vary in respect to the IC, LIC and LC composition. The heavy chain homodimer serves as a scaffold for the probable homodimeric assembly of the respective non-catalytic subunits. The ICs and LICs bind directly to the HC dimer and the LCs assemble on the IC dimer. Self-associates. Interacts with DYNC1H1; DYNC1LI1 and DYNC1LI2 bind mutually exclusive to DYNC1H1. Interacts with PCNT. Forms a complex with RAB11FIP3 and RAB11A1; the interaction between DYNC1LI1 and RAB11FIP3 is direct and induces DYNC1LI1 localization onto endosomal membrane; the complex regulates endocytic trafficking. Interacts with RUFY3. In terms of processing, phosphorylated during mitosis but not in interphase.

It is found in the cytoplasm. Its subcellular location is the chromosome. The protein resides in the centromere. It localises to the kinetochore. The protein localises to the cytoskeleton. It is found in the spindle pole. Its subcellular location is the recycling endosome membrane. Its function is as follows. Acts as one of several non-catalytic accessory components of the cytoplasmic dynein 1 complex that are thought to be involved in linking dynein to cargos and to adapter proteins that regulate dynein function. Cytoplasmic dynein 1 acts as a motor for the intracellular retrograde motility of vesicles and organelles along microtubules. May play a role in binding dynein to membranous organelles or chromosomes. Probably involved in the microtubule-dependent transport of pericentrin. Is required for progress through the spindle assembly checkpoint. The phosphorylated form appears to be involved in the selective removal of MAD1L1 and MAD1L2 but not BUB1B from kinetochores. Forms a functional Rab11/RAB11FIP3/dynein complex onto endosomal membrane that regulates the movement of peripheral sorting endosomes (SE) along microtubule tracks toward the microtubule organizing center/centrosome, generating the endosomal recycling compartment (ERC). The chain is Cytoplasmic dynein 1 light intermediate chain 1 (Dync1li1) from Mus musculus (Mouse).